We begin with the raw amino-acid sequence, 268 residues long: Phosphatidylglycerol--prolipoprotein diacylglyceryl transferase (268 aa).

7 consecutive transmembrane segments (helical) span residues 27 to 47 (PALRWYGFTYLVGFVAAMWLL), 66 to 86 (LLFYGFLGVILGGRIGYVLFY), 104 to 124 (GGMSFHGGLIGVITAMIYITW), 130 to 150 (FFAVADMVAPVVPIGLGAGRI), 181 to 201 (PSQLYQFALEGVALFLLLYWF), 208 to 228 (VGAVSGMFLLGYGIFRVIVET), and 242 to 262 (LMTMGQILSVPMILFGLYLIL). Arginine 149 provides a ligand contact to a 1,2-diacyl-sn-glycero-3-phospho-(1'-sn-glycerol).

The protein belongs to the Lgt family.

It is found in the cell inner membrane. It catalyses the reaction L-cysteinyl-[prolipoprotein] + a 1,2-diacyl-sn-glycero-3-phospho-(1'-sn-glycerol) = an S-1,2-diacyl-sn-glyceryl-L-cysteinyl-[prolipoprotein] + sn-glycerol 1-phosphate + H(+). Its pathway is protein modification; lipoprotein biosynthesis (diacylglyceryl transfer). Catalyzes the transfer of the diacylglyceryl group from phosphatidylglycerol to the sulfhydryl group of the N-terminal cysteine of a prolipoprotein, the first step in the formation of mature lipoproteins. In Shewanella oneidensis (strain ATCC 700550 / JCM 31522 / CIP 106686 / LMG 19005 / NCIMB 14063 / MR-1), this protein is Phosphatidylglycerol--prolipoprotein diacylglyceryl transferase.